The sequence spans 303 residues: Flavin-dependent thymidylate synthase (303 aa).

The disordered stretch occupies residues 1 to 21 (MALTSEQRAEIEAQRSEPQLT). One can recognise a ThyX domain in the interval 43–256 (GFLRVVDYMG…PATAAAFEEY (214 aa)). FAD is bound by residues threonine 89, 112–114 (RHR), and glutamate 120. Residues 109-112 (QWIR), 120-124 (EYSAR), and arginine 195 contribute to the dUMP site. Positions 112–122 (RHRMASVNEYS) match the ThyX motif motif. Residues 211–213 (DLH) and histidine 217 contribute to the FAD site. Position 222 (arginine 222) interacts with dUMP. Residue arginine 222 is the Involved in ionization of N3 of dUMP, leading to its activation of the active site.

It belongs to the thymidylate synthase ThyX family. In terms of assembly, homotetramer. FAD serves as cofactor.

It carries out the reaction dUMP + (6R)-5,10-methylene-5,6,7,8-tetrahydrofolate + NADPH + H(+) = dTMP + (6S)-5,6,7,8-tetrahydrofolate + NADP(+). It functions in the pathway pyrimidine metabolism; dTTP biosynthesis. Catalyzes the reductive methylation of 2'-deoxyuridine-5'-monophosphate (dUMP) to 2'-deoxythymidine-5'-monophosphate (dTMP) while utilizing 5,10-methylenetetrahydrofolate (mTHF) as the methyl donor, and NADPH and FADH(2) as the reductant. The sequence is that of Flavin-dependent thymidylate synthase from Gluconobacter oxydans (strain 621H) (Gluconobacter suboxydans).